The primary structure comprises 83 residues: Hainantoxin-III 8 (83 aa).

A signal peptide spans 1 to 21; the sequence is MKASMFLALAGLVLLFVVGYA. Residues 22–48 constitute a propeptide that is removed on maturation; that stretch reads SESEEKEFPRELLSKIFAVDDFTGEER. 3 disulfide bridges follow: Cys50–Cys65, Cys57–Cys70, and Cys64–Cys77. Leucine amide is present on Leu81.

This sequence belongs to the neurotoxin 10 (Hwtx-1) family. 15 (Hntx-3) subfamily. As to quaternary structure, monomer. As to expression, expressed by the venom gland.

It is found in the secreted. In terms of biological role, selective antagonist of neuronal tetrodotoxin (TTX)-sensitive voltage-gated sodium channels (IC(50)=1270 nM on Nav1.1/SCN1A, 270 nM on Nav1.2/SCN2A, 491 nM on Nav1.3/SCN3A and 232 nM on Nav1.7/SCN9A). This toxin suppress Nav1.7 current amplitude without significantly altering the activation, inactivation, and repriming kinetics. Short extreme depolarizations partially activate the toxin-bound channel, indicating voltage-dependent inhibition of this toxin. This toxin increases the deactivation of the Nav1.7 current after extreme depolarizations. The toxin-Nav1.7 complex is gradually dissociated upon prolonged strong depolarizations in a voltage-dependent manner, and the unbound toxin rebinds to Nav1.7 after a long repolarization. Moreover, analysis of chimeric channels showed that the DIIS3-S4 linker is critical for toxin binding to Nav1.7. These data are consistent with this toxin interacting with Nav1.7 site 4 and trapping the domain II voltage sensor in the closed state. This chain is Hainantoxin-III 8, found in Cyriopagopus hainanus (Chinese bird spider).